A 510-amino-acid chain; its full sequence is 2,3-bisphosphoglycerate-independent phosphoglycerate mutase (510 aa).

Residues D13 and S63 each coordinate Mn(2+). Residue S63 is the Phosphoserine intermediate of the active site. Residues H124, 154–155 (RD), R186, R192, 262–265 (RADR), and K334 each bind substrate. The Mn(2+) site is built by D401, H405, D442, H443, and H461.

It belongs to the BPG-independent phosphoglycerate mutase family. Monomer. Requires Mn(2+) as cofactor.

The enzyme catalyses (2R)-2-phosphoglycerate = (2R)-3-phosphoglycerate. It functions in the pathway carbohydrate degradation; glycolysis; pyruvate from D-glyceraldehyde 3-phosphate: step 3/5. Functionally, catalyzes the interconversion of 2-phosphoglycerate and 3-phosphoglycerate. The polypeptide is 2,3-bisphosphoglycerate-independent phosphoglycerate mutase (Vibrio vulnificus (strain YJ016)).